The following is a 967-amino-acid chain: Phosphoenolpyruvate carboxylase (967 aa).

At Ser10 the chain carries Phosphoserine. Residues His171 and Lys601 contribute to the active site. The disordered stretch occupies residues Asn915–Val936. Residues Glu924–Asp933 show a composition bias toward basic and acidic residues.

The protein belongs to the PEPCase type 1 family. In terms of assembly, homotetramer. The cofactor is Mg(2+).

The protein localises to the cytoplasm. The enzyme catalyses oxaloacetate + phosphate = phosphoenolpyruvate + hydrogencarbonate. With respect to regulation, by light-reversible phosphorylation. Through the carboxylation of phosphoenolpyruvate (PEP) it forms oxaloacetate, a four-carbon dicarboxylic acid source for the tricarboxylic acid cycle. The sequence is that of Phosphoenolpyruvate carboxylase from Pisum sativum (Garden pea).